A 250-amino-acid polypeptide reads, in one-letter code: 7-cyano-7-deazaguanine synthase (250 aa).

Residue 28–38 (LSGGLDSATCV) coordinates ATP. Residues Cys213, Cys226, Cys229, and Cys232 each coordinate Zn(2+).

It belongs to the QueC family. The cofactor is Zn(2+).

The catalysed reaction is 7-carboxy-7-deazaguanine + NH4(+) + ATP = 7-cyano-7-deazaguanine + ADP + phosphate + H2O + H(+). It participates in purine metabolism; 7-cyano-7-deazaguanine biosynthesis. Its function is as follows. Catalyzes the ATP-dependent conversion of 7-carboxy-7-deazaguanine (CDG) to 7-cyano-7-deazaguanine (preQ(0)). The protein is 7-cyano-7-deazaguanine synthase of Rhodopirellula baltica (strain DSM 10527 / NCIMB 13988 / SH1).